Here is a 738-residue protein sequence, read N- to C-terminus: 1,4-alpha-glucan branching enzyme GlgB (738 aa).

Catalysis depends on D417, which acts as the Nucleophile. E472 (proton donor) is an active-site residue.

It belongs to the glycosyl hydrolase 13 family. GlgB subfamily. Monomer.

It carries out the reaction Transfers a segment of a (1-&gt;4)-alpha-D-glucan chain to a primary hydroxy group in a similar glucan chain.. Its pathway is glycan biosynthesis; glycogen biosynthesis. Its function is as follows. Catalyzes the formation of the alpha-1,6-glucosidic linkages in glycogen by scission of a 1,4-alpha-linked oligosaccharide from growing alpha-1,4-glucan chains and the subsequent attachment of the oligosaccharide to the alpha-1,6 position. This is 1,4-alpha-glucan branching enzyme GlgB from Burkholderia pseudomallei (strain K96243).